We begin with the raw amino-acid sequence, 165 residues long: Cytochrome b6-f complex subunit 4 (165 aa).

A run of 3 helical transmembrane segments spans residues 36 to 56 (LLYI…GLAV), 95 to 115 (LLGV…PFLE), and 131 to 151 (TVFL…TLPI).

It belongs to the cytochrome b family. PetD subfamily. As to quaternary structure, the 4 large subunits of the cytochrome b6-f complex are cytochrome b6, subunit IV (17 kDa polypeptide, petD), cytochrome f and the Rieske protein, while the 4 small subunits are petG, petL, petM and petN. The complex functions as a dimer.

The protein resides in the plastid. It localises to the chloroplast thylakoid membrane. Functionally, component of the cytochrome b6-f complex, which mediates electron transfer between photosystem II (PSII) and photosystem I (PSI), cyclic electron flow around PSI, and state transitions. This chain is Cytochrome b6-f complex subunit 4, found in Populus alba (White poplar).